A 227-amino-acid polypeptide reads, in one-letter code: 7-cyano-7-deazaguanine synthase (227 aa).

8–18 is a binding site for ATP; it reads FSGGQDSTTCL. Cys187, Cys196, Cys199, and Cys202 together coordinate Zn(2+).

It belongs to the QueC family. Zn(2+) serves as cofactor.

It carries out the reaction 7-carboxy-7-deazaguanine + NH4(+) + ATP = 7-cyano-7-deazaguanine + ADP + phosphate + H2O + H(+). It functions in the pathway purine metabolism; 7-cyano-7-deazaguanine biosynthesis. In terms of biological role, catalyzes the ATP-dependent conversion of 7-carboxy-7-deazaguanine (CDG) to 7-cyano-7-deazaguanine (preQ(0)). This chain is 7-cyano-7-deazaguanine synthase, found in Shewanella pealeana (strain ATCC 700345 / ANG-SQ1).